Consider the following 493-residue polypeptide: NAD(P)H-quinone oxidoreductase chain 4, chloroplastic (493 aa).

The next 14 helical transmembrane spans lie at 4-24 (FPWL…IPLL), 34-54 (WYTL…FGYY), 87-107 (MGLI…AWPI), 111-131 (PKLF…LFTS), 134-154 (LFLF…LISL), 167-187 (FIFY…TVCF), 212-232 (ILYL…PFHT), 242-262 (HYST…YGWI), 276-296 (FAPW…SVCL), 313-333 (MGFV…GAIC), 334-354 (QMIS…TTYD), 385-405 (SLAL…LGII), 417-437 (FIIL…LSML), and 462-482 (VFII…PNIL).

The protein belongs to the complex I subunit 4 family.

It is found in the plastid. It localises to the chloroplast thylakoid membrane. The catalysed reaction is a plastoquinone + NADH + (n+1) H(+)(in) = a plastoquinol + NAD(+) + n H(+)(out). It carries out the reaction a plastoquinone + NADPH + (n+1) H(+)(in) = a plastoquinol + NADP(+) + n H(+)(out). This is NAD(P)H-quinone oxidoreductase chain 4, chloroplastic from Chara vulgaris (Common stonewort).